A 101-amino-acid polypeptide reads, in one-letter code: Small ribosomal subunit protein uS14 (101 aa).

The protein belongs to the universal ribosomal protein uS14 family. In terms of assembly, part of the 30S ribosomal subunit. Contacts proteins S3 and S10.

Functionally, binds 16S rRNA, required for the assembly of 30S particles and may also be responsible for determining the conformation of the 16S rRNA at the A site. This is Small ribosomal subunit protein uS14 from Haemophilus ducreyi (strain 35000HP / ATCC 700724).